The primary structure comprises 31 residues: Cytochrome b6-f complex subunit 6 (31 aa).

Residues alanine 3–phenylalanine 23 form a helical membrane-spanning segment.

It belongs to the PetL family. The 4 large subunits of the cytochrome b6-f complex are cytochrome b6, subunit IV (17 kDa polypeptide, PetD), cytochrome f and the Rieske protein, while the 4 small subunits are PetG, PetL, PetM and PetN. The complex functions as a dimer.

The protein resides in the cellular thylakoid membrane. In terms of biological role, component of the cytochrome b6-f complex, which mediates electron transfer between photosystem II (PSII) and photosystem I (PSI), cyclic electron flow around PSI, and state transitions. PetL is important for photoautotrophic growth as well as for electron transfer efficiency and stability of the cytochrome b6-f complex. In Nostoc sp. (strain PCC 7120 / SAG 25.82 / UTEX 2576), this protein is Cytochrome b6-f complex subunit 6.